We begin with the raw amino-acid sequence, 85 residues long: Large ribosomal subunit protein bL27 (85 aa).

Positions 1–20 (MAHKKAGGSTRNGRDSEAKR) are disordered.

It belongs to the bacterial ribosomal protein bL27 family.

This Salmonella agona (strain SL483) protein is Large ribosomal subunit protein bL27.